The sequence spans 186 residues: TATA-box-binding protein (186 aa).

2 consecutive repeat copies span residues 10 to 86 and 101 to 179.

This sequence belongs to the TBP family.

In terms of biological role, general factor that plays a role in the activation of archaeal genes transcribed by RNA polymerase. Binds specifically to the TATA box promoter element which lies close to the position of transcription initiation. This is TATA-box-binding protein from Haloarcula marismortui (strain ATCC 43049 / DSM 3752 / JCM 8966 / VKM B-1809) (Halobacterium marismortui).